A 108-amino-acid chain; its full sequence is Small ribosomal subunit protein bS16 (108 aa).

Belongs to the bacterial ribosomal protein bS16 family.

This is Small ribosomal subunit protein bS16 from Orientia tsutsugamushi (strain Boryong) (Rickettsia tsutsugamushi).